The sequence spans 285 residues: Ribonuclease H1 (285 aa).

The disordered stretch occupies residues R72–V126. The region spanning M135–K281 is the RNase H type-1 domain. The Mg(2+) site is built by D144, E185, D209, and D273.

Belongs to the RNase H family. As to quaternary structure, monomer. Requires Mg(2+) as cofactor.

It localises to the cytoplasm. The catalysed reaction is Endonucleolytic cleavage to 5'-phosphomonoester.. With respect to regulation, in the presence of magnesium, manganese is inhibitory. Its function is as follows. Endonuclease that specifically degrades the RNA of RNA-DNA hybrids. Plays a role in RNA polymerase II (RNAp II) transcription termination by degrading R-loop RNA-DNA hybrid formation at G-rich pause sites located downstream of the poly(A) site and behind the elongating RNAp II. In Mus musculus (Mouse), this protein is Ribonuclease H1 (Rnaseh1).